Reading from the N-terminus, the 94-residue chain is MTKSELIERLAGQQSHIPAKVVEDAVKEMLEQMATTLASGDRIEIRGFGSFSLHYRAPRVGRNPKTGEKVELEGKYVPHFKPGKELRDRANIYG.

The protein belongs to the bacterial histone-like protein family. As to quaternary structure, heterodimer of an alpha and a beta chain.

This protein is one of the two subunits of integration host factor, a specific DNA-binding protein that functions in genetic recombination as well as in transcriptional and translational control. The chain is Integration host factor subunit beta (ihfB) from Dickeya dadantii (strain 3937) (Erwinia chrysanthemi (strain 3937)).